The sequence spans 212 residues: Nascent polypeptide-associated complex subunit alpha-like protein 4 (212 aa).

The segment covering 25 to 35 (QKENDVVVEDV) has biased composition (basic and acidic residues). The interval 25 to 74 (QKENDVVVEDVKDGDEDDDDVDDDDDEIADGAGENEASKQSRSEKKSRKA) is disordered. A compositionally biased stretch (acidic residues) spans 36–53 (KDGDEDDDDVDDDDDEIA). Residues 65–130 (SRSEKKSRKA…AKIDDMSSQL (66 aa)) form the NAC-A/B domain. The UBA domain maps to 173–210 (VEAKDIDLVMTQAGVSRPKAVKALKESNGDIVSAIMEL).

This sequence belongs to the NAC-alpha family.

Its function is as follows. May promote appropriate targeting of ribosome-nascent polypeptide complexes. This chain is Nascent polypeptide-associated complex subunit alpha-like protein 4, found in Arabidopsis thaliana (Mouse-ear cress).